We begin with the raw amino-acid sequence, 615 residues long: Aldehyde oxidase GLOX1 (615 aa).

The signal sequence occupies residues 1 to 25 (MKKSTRLLWLLSIIVLVAAVSKAVA). A glycan (N-linked (GlcNAc...) asparagine) is linked at asparagine 35. The disordered stretch occupies residues 70 to 89 (PPKAGKGKGKGKGRGTVAAG). The segment covering 72 to 82 (KAGKGKGKGKG) has biased composition (basic residues). 2 N-linked (GlcNAc...) asparagine glycosylation sites follow: asparagine 187 and asparagine 297.

It localises to the secreted. The catalysed reaction is an aldehyde + O2 + H2O = a carboxylate + H2O2 + H(+). Catalyzes the oxidation of aldehydes to the corresponding carboxylate by coupling the reaction to the reduction of dioxygen to hydrogen peroxide. Substrates include glyoxal and other aldehydes. May be regulated by the transcription factor MYB80 during anther development and play a role in tapetum and pollen development. This Arabidopsis thaliana (Mouse-ear cress) protein is Aldehyde oxidase GLOX1.